The primary structure comprises 374 residues: Queuine tRNA-ribosyltransferase (374 aa).

Asp-89 functions as the Proton acceptor in the catalytic mechanism. Residues 89-93, Asp-143, Gln-187, and Gly-214 each bind substrate; that span reads DSGGF. The segment at 245 to 251 is RNA binding; sequence GVGKPED. Asp-264 functions as the Nucleophile in the catalytic mechanism. The interval 269-273 is RNA binding; important for wobble base 34 recognition; that stretch reads TRNAR. Zn(2+) is bound by residues Cys-302, Cys-304, Cys-307, and His-333.

It belongs to the queuine tRNA-ribosyltransferase family. As to quaternary structure, homodimer. Within each dimer, one monomer is responsible for RNA recognition and catalysis, while the other monomer binds to the replacement base PreQ1. Zn(2+) is required as a cofactor.

The catalysed reaction is 7-aminomethyl-7-carbaguanine + guanosine(34) in tRNA = 7-aminomethyl-7-carbaguanosine(34) in tRNA + guanine. The protein operates within tRNA modification; tRNA-queuosine biosynthesis. Functionally, catalyzes the base-exchange of a guanine (G) residue with the queuine precursor 7-aminomethyl-7-deazaguanine (PreQ1) at position 34 (anticodon wobble position) in tRNAs with GU(N) anticodons (tRNA-Asp, -Asn, -His and -Tyr). Catalysis occurs through a double-displacement mechanism. The nucleophile active site attacks the C1' of nucleotide 34 to detach the guanine base from the RNA, forming a covalent enzyme-RNA intermediate. The proton acceptor active site deprotonates the incoming PreQ1, allowing a nucleophilic attack on the C1' of the ribose to form the product. After dissociation, two additional enzymatic reactions on the tRNA convert PreQ1 to queuine (Q), resulting in the hypermodified nucleoside queuosine (7-(((4,5-cis-dihydroxy-2-cyclopenten-1-yl)amino)methyl)-7-deazaguanosine). The chain is Queuine tRNA-ribosyltransferase from Shewanella frigidimarina (strain NCIMB 400).